The following is a 487-amino-acid chain: Beta-barrel assembly-enhancing protease (487 aa).

The N-terminal stretch at 1–27 (MFRQLKKNLVATLIAAMTIGQVAPAFA) is a signal peptide. H136 contacts Zn(2+). E137 is a catalytic residue. Residues H140 and E201 each coordinate Zn(2+). The active-site Proton donor is the D205. TPR repeat units lie at residues 309–342 (RAAQ…EPGN), 344–376 (WYLD…RTNP), 377–409 (VLQL…NKDD), and 427–460 (DQEL…VKLG).

The protein belongs to the peptidase M48 family. BepA subfamily. In terms of assembly, interacts with BamA and LoiP. Zn(2+) is required as a cofactor.

It localises to the periplasm. Protease activity is inhibited by the metal chelating reagents 1,10-phenanthroline and EDTA. Its function is as follows. Functions both as a chaperone and a metalloprotease. Maintains the integrity of the outer membrane by promoting either the assembly or the elimination of outer membrane proteins, depending on their folding state. Promotes disulfide rearrangement of LptD during its biogenesis, and proteolytic degradation of LptD and BamA when their proper assembly is compromised. May facilitate membrane attachment of LoiP under unfavorable conditions. The sequence is that of Beta-barrel assembly-enhancing protease from Escherichia coli (strain K12).